Here is a 230-residue protein sequence, read N- to C-terminus: Ribonuclease 3 (230 aa).

An RNase III domain is found at 5–125 (YSRFYNILGY…VIGAIYLDSD (121 aa)). A Mg(2+)-binding site is contributed by Glu-40. Residue Asp-44 is part of the active site. Asp-111 and Glu-114 together coordinate Mg(2+). Residue Glu-114 is part of the active site. Residues 153-223 (DSKSKLQEIL…AEKMIEMLSQ (71 aa)) form the DRBM domain.

Belongs to the ribonuclease III family. Homodimer. It depends on Mg(2+) as a cofactor.

It is found in the cytoplasm. It catalyses the reaction Endonucleolytic cleavage to 5'-phosphomonoester.. Its function is as follows. Digests double-stranded RNA. Involved in the processing of primary rRNA transcript to yield the immediate precursors to the large and small rRNAs (23S and 16S). Also processes some mRNAs, and tRNAs when they are encoded in the rRNA operon. Functionally, CRISPR (clustered regularly interspaced short palindromic repeat) is an adaptive immune system that provides protection against mobile genetic elements (viruses, transposable elements and conjugative plasmids). CRISPR clusters contain spacers, sequences complementary to antecedent mobile elements, and target invading nucleic acids. CRISPR clusters are transcribed and processed into CRISPR RNA (crRNA). In this organism endogenous ribonuclease 3 and Cas9 are required for correct coprocessing of pre-crRNA and the trans-encoded small RNA (tracrRNA). Cas9, crRNA and tracrRNA are required for cleavage of invading DNA. Complements pre-crRNA and tracrRNA coprocessing defects in an rnc deletion in S.pyogenes strain 370. The polypeptide is Ribonuclease 3 (Francisella tularensis subsp. novicida (strain U112)).